The chain runs to 123 residues: Probable non-functional immunoglobulin lambda variable 11-55 (123 aa).

Residues 1–19 (MALTPLLLLLLSHCTGSLS) form the signal peptide. The tract at residues 20 to 44 (RPVLTQPPSLSASPGATARLPCTLS) is framework-1. An Ig-like domain is found at 21 to 123 (PVLTQPPSLS…YCQVYESSAN (103 aa)). An intrachain disulfide couples C41 to C115. Residues 45–53 (SDLSVGGKN) form a complementarity-determining-1 region. The segment at 54-70 (MFWYQQKLGSSPRLFLY) is framework-2. The complementarity-determining-2 stretch occupies residues 71–77 (HYSDSDK). Residues 78 to 115 (QLGPGVPSRVSGSKETSSNTAFLLISGLQPEDEADYYC) form a framework-3 region. Residues 116–123 (QVYESSAN) form a complementarity-determining-3 region.

Immunoglobulins are composed of two identical heavy chains and two identical light chains; disulfide-linked.

The protein localises to the secreted. Its subcellular location is the cell membrane. Its function is as follows. Probable non-functional open reading frame (ORF) of V region of the variable domain of immunoglobulin light chains. Non-functional ORF generally cannot participate in the synthesis of a productive immunoglobulin chain due to altered V-(D)-J or switch recombination and/or splicing site (at mRNA level) and/or conserved amino acid change (protein level). Immunoglobulins, also known as antibodies, are membrane-bound or secreted glycoproteins produced by B lymphocytes. In the recognition phase of humoral immunity, the membrane-bound immunoglobulins serve as receptors which, upon binding of a specific antigen, trigger the clonal expansion and differentiation of B lymphocytes into immunoglobulins-secreting plasma cells. Secreted immunoglobulins mediate the effector phase of humoral immunity, which results in the elimination of bound antigens. The antigen binding site is formed by the variable domain of one heavy chain, together with that of its associated light chain. Thus, each immunoglobulin has two antigen binding sites with remarkable affinity for a particular antigen. The variable domains are assembled by a process called V-(D)-J rearrangement and can then be subjected to somatic hypermutations which, after exposure to antigen and selection, allow affinity maturation for a particular antigen. This chain is Probable non-functional immunoglobulin lambda variable 11-55, found in Homo sapiens (Human).